Consider the following 325-residue polypeptide: Casein kinase I isoform alpha (325 aa).

Ala-2 carries the N-acetylalanine modification. A Phosphoserine modification is found at Ser-4. At Lys-8 the chain carries N6-acetyllysine. Positions 17–285 (YKLVRKIGSG…YLRQLFRILF (269 aa)) constitute a Protein kinase domain. ATP is bound by residues 23–31 (IGSGSFGDI) and Lys-46. The active-site Proton acceptor is the Asp-136.

Belongs to the protein kinase superfamily. CK1 Ser/Thr protein kinase family. Casein kinase I subfamily. Interacts with the Axin complex. Interacts with TUT1, leading to TUT1 phosphorylation. Interacts with FAM83A, FAM83B, FAM83C, FAM83D, FAM83E, FAM83F, FAM83G and FAM83H (via DUF1669). Interaction with FAM83H recruits CSNK1A1 to keratin filaments. Phosphorylated by MTOR in response to mitogenic stimulation, leading to its activation.

The protein localises to the cytoplasm. Its subcellular location is the cytoskeleton. The protein resides in the microtubule organizing center. It localises to the centrosome. It is found in the chromosome. The protein localises to the centromere. Its subcellular location is the kinetochore. The protein resides in the nucleus speckle. It localises to the cilium basal body. It is found in the spindle. The enzyme catalyses L-seryl-[protein] + ATP = O-phospho-L-seryl-[protein] + ADP + H(+). It catalyses the reaction L-threonyl-[protein] + ATP = O-phospho-L-threonyl-[protein] + ADP + H(+). In terms of biological role, casein kinases are operationally defined by their preferential utilization of acidic proteins such as caseins as substrates. Can phosphorylate a large number of proteins. Participates in Wnt signaling. Phosphorylates CTNNB1 at 'Ser-45'. May phosphorylate PER1 and PER2. May play a role in segregating chromosomes during mitosis. May play a role in keratin cytoskeleton disassembly and thereby, it may regulate epithelial cell migration. Acts as a positive regulator of mTORC1 and mTORC2 signaling in response to nutrients by mediating phosphorylation of DEPTOR inhibitor. Acts as an inhibitor of NLRP3 inflammasome assembly by mediating phosphorylation of NLRP3. This chain is Casein kinase I isoform alpha (CSNK1A1), found in Oryctolagus cuniculus (Rabbit).